The following is a 350-amino-acid chain: Patr class I histocompatibility antigen, alpha chain E (350 aa).

A signal peptide spans 1 to 21 (MVDGTLLLLLSEALALTQTWA). An alpha-1 region spans residues 22–111 (GSHSLKYFHT…LRGYYNQSEA (90 aa)). At 22–305 (GSHSLKYFHT…KPASQPTIPI (284 aa)) the chain is on the extracellular side. Asparagine 107 is a glycosylation site (N-linked (GlcNAc...) asparagine). Positions 112–203 (GSHTLQWMHG…EKGKETLLHL (92 aa)) are alpha-2. 2 disulfide bridges follow: cysteine 122–cysteine 185 and cysteine 224–cysteine 280. The tract at residues 204 to 295 (EPPKTHVTHH…GLPEPLTLRW (92 aa)) is alpha-3. The 89-residue stretch at 206-294 (PKTHVTHHPI…EGLPEPLTLR (89 aa)) folds into the Ig-like C1-type domain. The interval 296–305 (KPASQPTIPI) is connecting peptide. Residues 306 to 329 (VGIIAGLVLLGSVVSGAVVAAVMW) form a helical membrane-spanning segment. Residues 330 to 350 (RKKSSGGKGRSYSKAEWSDSA) are Cytoplasmic-facing.

The protein belongs to the MHC class I family. Heterodimer of an alpha chain and a beta chain (beta-2-microglobulin).

Its subcellular location is the membrane. In terms of biological role, preferably binds to a peptide derived from the signal sequence of most HLA-A, -B, -C and -G molecules. This chain is Patr class I histocompatibility antigen, alpha chain E (Patr-E), found in Pan troglodytes (Chimpanzee).